Consider the following 261-residue polypeptide: Pyrroline-5-carboxylate reductase (261 aa).

It belongs to the pyrroline-5-carboxylate reductase family.

The protein localises to the cytoplasm. The catalysed reaction is L-proline + NADP(+) = (S)-1-pyrroline-5-carboxylate + NADPH + 2 H(+). It carries out the reaction L-proline + NAD(+) = (S)-1-pyrroline-5-carboxylate + NADH + 2 H(+). It participates in amino-acid biosynthesis; L-proline biosynthesis; L-proline from L-glutamate 5-semialdehyde: step 1/1. Functionally, catalyzes the reduction of 1-pyrroline-5-carboxylate (PCA) to L-proline. This chain is Pyrroline-5-carboxylate reductase, found in Thermus thermophilus (strain ATCC BAA-163 / DSM 7039 / HB27).